Consider the following 208-residue polypeptide: Imidazoleglycerol-phosphate dehydratase (208 aa).

This sequence belongs to the imidazoleglycerol-phosphate dehydratase family.

It is found in the cytoplasm. The catalysed reaction is D-erythro-1-(imidazol-4-yl)glycerol 3-phosphate = 3-(imidazol-4-yl)-2-oxopropyl phosphate + H2O. Its pathway is amino-acid biosynthesis; L-histidine biosynthesis; L-histidine from 5-phospho-alpha-D-ribose 1-diphosphate: step 6/9. The polypeptide is Imidazoleglycerol-phosphate dehydratase (Pseudarthrobacter chlorophenolicus (strain ATCC 700700 / DSM 12829 / CIP 107037 / JCM 12360 / KCTC 9906 / NCIMB 13794 / A6) (Arthrobacter chlorophenolicus)).